The primary structure comprises 123 residues: DNA-directed RNA polymerase subunit omega (123 aa).

The segment at Q72 to V100 is disordered.

It belongs to the RNA polymerase subunit omega family. In terms of assembly, the RNAP catalytic core consists of 2 alpha, 1 beta, 1 beta' and 1 omega subunit. When a sigma factor is associated with the core the holoenzyme is formed, which can initiate transcription.

The catalysed reaction is RNA(n) + a ribonucleoside 5'-triphosphate = RNA(n+1) + diphosphate. In terms of biological role, promotes RNA polymerase assembly. Latches the N- and C-terminal regions of the beta' subunit thereby facilitating its interaction with the beta and alpha subunits. In Maricaulis maris (strain MCS10) (Caulobacter maris), this protein is DNA-directed RNA polymerase subunit omega.